We begin with the raw amino-acid sequence, 650 residues long: Acetoacetyl-coenzyme A synthetase (650 aa).

199–202 (YNGK) contacts CoA. ATP contacts are provided by residues 392–394 (GSP), Asp504, Arg519, and Arg530. Val546 contributes to the Mg(2+) binding site. Position 587 (Arg587) interacts with CoA. Lys612 bears the N6-acetyllysine mark.

This sequence belongs to the ATP-dependent AMP-binding enzyme family. Mg(2+) serves as cofactor. In terms of processing, acetylated. Deacetylation by the SIR2-homolog deacetylase activates the enzyme.

It carries out the reaction acetoacetate + ATP + CoA = acetoacetyl-CoA + AMP + diphosphate. The protein operates within biopolymer metabolism; poly-(R)-3-hydroxybutanoate degradation. Catalyzes the conversion of acetoacetate into acetoacetyl-CoA. Is involved in poly-3-hydroxybutyrate (PHB) degradation, which allows growth of R.meliloti on PHB cycle intermediates. The polypeptide is Acetoacetyl-coenzyme A synthetase (Rhizobium meliloti (strain 1021) (Ensifer meliloti)).